Here is a 1366-residue protein sequence, read N- to C-terminus: DNA-directed RNA polymerase subunit beta' (1366 aa).

Over residues 1-20 the composition is skewed to basic residues; sequence MTSSKPKKTSRVRKTTKNSK. A disordered region spans residues 1-37; the sequence is MTSSKPKKTSRVRKTTKNSKKNNPVTMPVLPKTPPSF. Residues Cys-248, Cys-315, Cys-322, and Cys-325 each contribute to the Zn(2+) site. The segment at 1292-1366 is disordered; it reads TVDMPQSPAV…LQEEGLLSDE (75 aa). Positions 1354–1366 are enriched in low complexity; the sequence is LEGLQEEGLLSDE.

The protein belongs to the RNA polymerase beta' chain family. RpoC2 subfamily. In cyanobacteria the RNAP catalytic core is composed of 2 alpha, 1 beta, 1 beta', 1 gamma and 1 omega subunit. When a sigma factor is associated with the core the holoenzyme is formed, which can initiate transcription. Requires Zn(2+) as cofactor.

It carries out the reaction RNA(n) + a ribonucleoside 5'-triphosphate = RNA(n+1) + diphosphate. DNA-dependent RNA polymerase catalyzes the transcription of DNA into RNA using the four ribonucleoside triphosphates as substrates. The protein is DNA-directed RNA polymerase subunit beta' of Prochlorococcus marinus (strain MIT 9215).